A 147-amino-acid chain; its full sequence is Hemoglobin subunit beta (147 aa).

The Globin domain occupies 3-147 (NWTKTEKATI…VMSALGKQYH (145 aa)). His64 and His93 together coordinate heme b.

It belongs to the globin family. Heterotetramer of two alpha chains and two beta chains. Red blood cells.

In terms of biological role, involved in oxygen transport from gills to the various peripheral tissues. The polypeptide is Hemoglobin subunit beta (hbb) (Gymnodraco acuticeps (Antarctic dragonfish)).